The chain runs to 1095 residues: Collagen, type I, alpha 1a (1095 aa).

A compositionally biased stretch (pro residues) spans 1–21; that stretch reads SPAMPVPGPMGPMGPRGPPGS. A disordered region spans residues 1-1011; the sequence is SPAMPVPGPM…QPQEKAPDPY (1011 aa). A compositionally biased stretch (low complexity) spans 22–49; the sequence is PGASGPQGFTGPPGEPGEAGSAGAMGPR. Residues 58–72 are compositionally biased toward basic and acidic residues; it reads NGEDGESGKPGRGGE. The span at 127 to 145 shows a compositional bias: low complexity; that stretch reads TGAAGAAGARGNDGAAGAA. Pro residues predominate over residues 147-160; sequence PPGPTGPAGPPGFP. The segment covering 161–179 has biased composition (gly residues); that stretch reads GGPGAKGDAGAQGGRGPEG. Low complexity-rich tracts occupy residues 180 to 223, 232 to 270, and 288 to 297; these read PAGA…AGAP, SGPQGAAGAPGPKGNTGEVGAPGAKGEAGAKGEAGAPGV, and EPGAAGARGA. Over residues 299–311 the composition is skewed to gly residues; sequence GERGGPGGRGFPG. Composition is skewed to low complexity over residues 385-400, 477-489, 498-544, and 577-592; these read VGARGQPGVMGFPGPK, LPGEAGATGPAGA, ERGA…QGMP, and RGLTGPLGLPGPAGAT. Positions 602–611 are enriched in gly residues; the sequence is GPVGPGGARG. Composition is skewed to low complexity over residues 625-661 and 675-697; these read AGFAGPPGADGQPGAKGEAGDNGAKGDAGPPGAAGPT and PKGARGAAGPPGATGFPGAAGRV. Over residues 699–712 the composition is skewed to pro residues; the sequence is PPGPSGNPGPPGPA. Residues 804-822 show a composition bias toward low complexity; the sequence is PGLAGAPGEPGREGSPGNE. Pro residues predominate over residues 848 to 858; the sequence is APGPPGAPGPV. The segment covering 872-893 has biased composition (low complexity); that stretch reads PAGPAGSAGPAGPRGPAGALGL. Basic and acidic residues predominate over residues 894–908; that stretch reads RGDKGESGEAGERGM. The segment covering 924 to 960 has biased composition (low complexity); sequence AGSSGEQGPAGAAGPAGPRGPAGSAGSPGKDGMSGLP. Pro residues predominate over residues 976 to 988; it reads AGPPGPPGPPGAP. The region spanning 1062-1095 is the Fibrillar collagen NC1 domain; sequence TGTWGKLPLLDLAPMDVGAPDQEFGLEVGPVCFL.

This sequence belongs to the fibrillar collagen family.

The protein localises to the secreted. It is found in the extracellular space. The protein resides in the extracellular matrix. The sequence is that of Collagen, type I, alpha 1a from Epinephelus caninus (Dogtooth grouper).